A 234-amino-acid polypeptide reads, in one-letter code: MGLGVRAAPFTYVAHALAVAAATMVLVWCIHFRGGLAFEATNKNLIFNVHPVLMLIGYIILGSEAIMVYKVLPTWKHDTTKLIHLILHAIALVFGAVGIYCAFKFHNESGIANLYSLHSWLGIGTICLYGIQWIFGFVAFFFPRASPSVRKGVLPWHILFGLFVYILALATAELGFLEKLTFLQSSGLDKYGAEAFLVNFTALIVVLFGASVVVAAVSPARVEEPHEYAPIPES.

Topologically, residues 1-9 (MGLGVRAAP) are cytoplasmic. The helical transmembrane segment at 10–30 (FTYVAHALAVAAATMVLVWCI) threads the bilayer. The Cytochrome b561 domain maps to 13 to 217 (VAHALAVAAA…FGASVVVAAV (205 aa)). Over 31–48 (HFRGGLAFEATNKNLIFN) the chain is Extracellular. The chain crosses the membrane as a helical span at residues 49-69 (VHPVLMLIGYIILGSEAIMVY). His50 contacts heme b. 65–73 (AIMVYKVLP) contributes to the L-ascorbate binding site. The Cytoplasmic portion of the chain corresponds to 70–82 (KVLPTWKHDTTKL). The chain crosses the membrane as a helical span at residues 83 to 103 (IHLILHAIALVFGAVGIYCAF). Heme b is bound by residues His84 and His118. Topologically, residues 104–121 (KFHNESGIANLYSLHSWL) are extracellular. Residue 114–123 (LYSLHSWLGI) participates in monodehydro-L-ascorbate radical binding. The chain crosses the membrane as a helical span at residues 122-142 (GIGTICLYGIQWIFGFVAFFF). At 143–151 (PRASPSVRK) the chain is on the cytoplasmic side. Residues 152 to 172 (GVLPWHILFGLFVYILALATA) traverse the membrane as a helical segment. A heme b-binding site is contributed by His157. Residues 173–194 (ELGFLEKLTFLQSSGLDKYGAE) lie on the Extracellular side of the membrane. The chain crosses the membrane as a helical span at residues 195–215 (AFLVNFTALIVVLFGASVVVA). Topologically, residues 216-234 (AVSPARVEEPHEYAPIPES) are cytoplasmic.

It depends on heme b as a cofactor.

The protein localises to the membrane. In terms of biological role, two-heme-containing cytochrome. Catalyzes ascorbate-dependent trans-membrane electron transfer by utilizing a concerted H(+)/e(-) transfer mechanism. This Oryza sativa subsp. japonica (Rice) protein is Probable ascorbate-specific transmembrane electron transporter 1.